The following is a 441-amino-acid chain: Amino-acid acetyltransferase (441 aa).

Residues 295-434 form the N-acetyltransferase domain; that stretch reads EQIRRANIND…QALYNYQRRS (140 aa).

It belongs to the acetyltransferase family. ArgA subfamily. As to quaternary structure, homohexamer.

The protein resides in the cytoplasm. It carries out the reaction L-glutamate + acetyl-CoA = N-acetyl-L-glutamate + CoA + H(+). Its pathway is amino-acid biosynthesis; L-arginine biosynthesis; N(2)-acetyl-L-ornithine from L-glutamate: step 1/4. This chain is Amino-acid acetyltransferase, found in Edwardsiella ictaluri (strain 93-146).